Reading from the N-terminus, the 325-residue chain is Elongation factor P--(R)-beta-lysine ligase (325 aa).

76-78 (SPE) lines the substrate pocket. ATP-binding positions include 100-102 (RNE) and asparagine 109. Tyrosine 118 contributes to the substrate binding site. Residue 244-245 (EL) participates in ATP binding. Position 251 (glutamate 251) interacts with substrate. Glycine 300 contributes to the ATP binding site.

It belongs to the class-II aminoacyl-tRNA synthetase family. EpmA subfamily. As to quaternary structure, homodimer.

The enzyme catalyses D-beta-lysine + L-lysyl-[protein] + ATP = N(6)-((3R)-3,6-diaminohexanoyl)-L-lysyl-[protein] + AMP + diphosphate + H(+). Functionally, with EpmB is involved in the beta-lysylation step of the post-translational modification of translation elongation factor P (EF-P) on 'Lys-34'. Catalyzes the ATP-dependent activation of (R)-beta-lysine produced by EpmB, forming a lysyl-adenylate, from which the beta-lysyl moiety is then transferred to the epsilon-amino group of EF-P 'Lys-34'. This is Elongation factor P--(R)-beta-lysine ligase from Salmonella paratyphi A (strain ATCC 9150 / SARB42).